A 677-amino-acid chain; its full sequence is UvrABC system protein B (677 aa).

One can recognise a Helicase ATP-binding domain in the interval 27–414 (ANLGHGVRDQ…SQGVIAEQII (388 aa)). Position 40–47 (40–47 (GVTGSGKT)) interacts with ATP. The short motif at 93–116 (YYDYYQPEAYVPASDTYIEKDSSI) is the Beta-hairpin element. The region spanning 432 to 594 (QVDDLLAECR…IEPRTIRKSL (163 aa)) is the Helicase C-terminal domain. The 36-residue stretch at 638–673 (AKHIQKLEREMREAAKELEFERAATLRDRIRLLRER) folds into the UVR domain.

The protein belongs to the UvrB family. In terms of assembly, forms a heterotetramer with UvrA during the search for lesions. Interacts with UvrC in an incision complex.

Its subcellular location is the cytoplasm. Its function is as follows. The UvrABC repair system catalyzes the recognition and processing of DNA lesions. A damage recognition complex composed of 2 UvrA and 2 UvrB subunits scans DNA for abnormalities. Upon binding of the UvrA(2)B(2) complex to a putative damaged site, the DNA wraps around one UvrB monomer. DNA wrap is dependent on ATP binding by UvrB and probably causes local melting of the DNA helix, facilitating insertion of UvrB beta-hairpin between the DNA strands. Then UvrB probes one DNA strand for the presence of a lesion. If a lesion is found the UvrA subunits dissociate and the UvrB-DNA preincision complex is formed. This complex is subsequently bound by UvrC and the second UvrB is released. If no lesion is found, the DNA wraps around the other UvrB subunit that will check the other stand for damage. The polypeptide is UvrABC system protein B (Nitratidesulfovibrio vulgaris (strain ATCC 29579 / DSM 644 / CCUG 34227 / NCIMB 8303 / VKM B-1760 / Hildenborough) (Desulfovibrio vulgaris)).